The sequence spans 122 residues: Large ribosomal subunit protein bL12 (122 aa).

The protein belongs to the bacterial ribosomal protein bL12 family. As to quaternary structure, homodimer. Part of the 50S ribosomal subunit; present in 4 copies per ribosome. Forms part of the ribosomal stalk which helps the ribosome interact with GTP-bound translation factors. Forms a pentameric L10(L12)2(L12)2 complex, where L10 forms an elongated spine to which 2 L12 dimers bind in a sequential fashion.

Forms part of the ribosomal stalk which helps the ribosome interact with GTP-bound translation factors. Is thus essential for accurate translation. This is Large ribosomal subunit protein bL12 from Geobacillus stearothermophilus (Bacillus stearothermophilus).